We begin with the raw amino-acid sequence, 271 residues long: MPEAPPLLLAAVLLGLVLLVVLLLLLRHWGWGLCLIGWNEFILQPIHNLLMGDTKEQRILNHVLQHAEPGNAQSVLEAIDTYCEQKEWAMNVGDKKGKIVDAVIQEHQPSVLLELGAYCGYSAVRMARLLSPGARLITIEINPDCAAITQRMVDFAGVKDKVTLVVGASQDIIPQLKKKYDVDTLDMVFLDHWKDRYLPDTLLLEECGLLRKGTVLLADNVICPGAPDFLAHVRGSSCFECTHYQSFLEYREVVDGLEKAIYKGPGSEAGP.

Residues 1–6 (MPEAPP) are Cytoplasmic-facing. The chain crosses the membrane as a helical; Signal-anchor for type II membrane protein span at residues 7–26 (LLLAAVLLGLVLLVVLLLLL). At 27-271 (RHWGWGLCLI…YKGPGSEAGP (245 aa)) the chain is on the extracellular side. S-adenosyl-L-methionine contacts are provided by residues Val-92, Glu-114, Ser-122, Glu-140, Ile-141, 167 to 170 (GASQ), Ser-169, and Asp-191. Asp-191 is a binding site for Mg(2+). Substrate is bound at residue Lys-194. Residues Asp-219 and Asn-220 each contribute to the Mg(2+) site. Residues Asn-220 and Glu-249 each contribute to the substrate site. Ser-267 bears the Phosphoserine mark.

Belongs to the class I-like SAM-binding methyltransferase superfamily. Cation-dependent O-methyltransferase family. Mg(2+) serves as cofactor. The N-terminus is blocked. In terms of tissue distribution, brain, liver, placenta, lymphocytes and erythrocytes.

Its subcellular location is the cytoplasm. The protein localises to the cell membrane. The catalysed reaction is a catechol + S-adenosyl-L-methionine = a guaiacol + S-adenosyl-L-homocysteine + H(+). The enzyme catalyses 2-hydroxyestrone + S-adenosyl-L-methionine = 2-hydroxy-3-methoxy-estrone + S-adenosyl-L-homocysteine + H(+). It catalyses the reaction 4-hydroxyestrone + S-adenosyl-L-methionine = 4-methoxyestrone + S-adenosyl-L-homocysteine + H(+). It carries out the reaction 2-hydroxyestrone + S-adenosyl-L-methionine = 2-methoxyestrone + S-adenosyl-L-homocysteine + H(+). The catalysed reaction is 4-hydroxy-17beta-estradiol + S-adenosyl-L-methionine = 4-methoxy-17beta-estradiol + S-adenosyl-L-homocysteine + H(+). The enzyme catalyses 2-hydroxy-17beta-estradiol + S-adenosyl-L-methionine = 2-hydroxy-3-methoxy-17beta-estradiol + S-adenosyl-L-homocysteine + H(+). It catalyses the reaction 2-hydroxy-17beta-estradiol + S-adenosyl-L-methionine = 2-methoxy-17beta-estradiol + S-adenosyl-L-homocysteine + H(+). Its function is as follows. Catalyzes the O-methylation, and thereby the inactivation, of catecholamine neurotransmitters and catechol hormones. Also shortens the biological half-lives of certain neuroactive drugs, like L-DOPA, alpha-methyl DOPA and isoproterenol. This chain is Catechol O-methyltransferase, found in Homo sapiens (Human).